Here is a 1316-residue protein sequence, read N- to C-terminus: DNA-directed RNA polymerase subunit beta' (1316 aa).

Zn(2+) is bound by residues Cys60, Cys62, Cys75, and Cys78. Positions 535, 537, and 539 each coordinate Mg(2+). Zn(2+) is bound by residues Cys891, Cys968, Cys975, and Cys978.

This sequence belongs to the RNA polymerase beta' chain family. In terms of assembly, the RNAP catalytic core consists of 2 alpha, 1 beta, 1 beta' and 1 omega subunit. When a sigma factor is associated with the core the holoenzyme is formed, which can initiate transcription. Mg(2+) is required as a cofactor. It depends on Zn(2+) as a cofactor.

The catalysed reaction is RNA(n) + a ribonucleoside 5'-triphosphate = RNA(n+1) + diphosphate. In terms of biological role, DNA-dependent RNA polymerase catalyzes the transcription of DNA into RNA using the four ribonucleoside triphosphates as substrates. The sequence is that of DNA-directed RNA polymerase subunit beta' from Mycobacterium tuberculosis (strain CDC 1551 / Oshkosh).